Here is a 253-residue protein sequence, read N- to C-terminus: Ice-binding protein (253 aa).

Positions Met1–Ala27 are cleaved as a signal peptide. Cys75 and Cys93 are oxidised to a cystine. Short sequence motifs (ice-binding site motif (T-A/G-X-T/N)) lie at residues Thr220–Thr223 and Thr232–Thr235.

Belongs to the ice-binding protein family.

It localises to the secreted. Its function is as follows. Binds to the surface of ice crystals and inhibits their growth. Has ice recrystallization inhibition (RI) activity (the ability to prevent the formation of larger grains of ice at the expense of smaller grains), which may protect membranes from freezing injury. Has high thermal hysteresis (TH) activity, which is the ability to lower the freezing point of an aqueous solution below its melting point, and thus the freezing of the cell fluid can be prevented protecting the organism from ice damage. The TH activity of this protein is 3.8 degrees Celsius at 14 mM. In Colwellia sp, this protein is Ice-binding protein.